Reading from the N-terminus, the 66-residue chain is MGTLCSVCKRRPNPVDTEGKVINVTDDFEEMSETEIMLACPQDKKLCKKPKESMYKTKHKSNKHGI.

G2 carries the N-myristoyl glycine; by host lipid modification.

This sequence belongs to the herpesviridae cytoplasmic envelopment protein 3 family. In terms of assembly, interacts with cytoplasmic envelopment protein 2; this interaction is essential for the proper localization of each protein to the assembly complex and thus for the production of infectious virus. Post-translationally, phosphorylated. Phosphorylation does not seem to be required for recycling to the host Golgi apparatus. Packaging is selective for underphosphorylated forms.

It is found in the virion tegument. The protein resides in the virion membrane. The protein localises to the host cell membrane. It localises to the host Golgi apparatus membrane. In terms of biological role, plays an important role in the cytoplasmic envelopment of tegument proteins and capsids during the assembly and egress processes. Also participates in viral entry at the fusion step probably by regulating the core fusion machinery. The polypeptide is Cytoplasmic envelopment protein 3 (38) (Saimiriine herpesvirus 2 (strain 11) (SaHV-2)).